Consider the following 222-residue polypeptide: 2-hydroxypent-2,4-dienoate hydratase (222 aa).

This sequence belongs to the hydratase/decarboxylase family.

It participates in aromatic compound metabolism; benzoate degradation via hydroxylation. Functionally, conversion of 2-hydroxypent-2,4-dienoate into 4-hydroxy-2-oxopentanoate. This is 2-hydroxypent-2,4-dienoate hydratase (xylJ) from Pseudomonas putida (Arthrobacter siderocapsulatus).